The sequence spans 355 residues: tRNA uridine(34) hydroxylase (355 aa).

The region spanning 146 to 240 (DDPDTVFVDM…YARQAKAQGL (95 aa)) is the Rhodanese domain. C200 serves as the catalytic Cysteine persulfide intermediate.

The protein belongs to the TrhO family.

It catalyses the reaction uridine(34) in tRNA + AH2 + O2 = 5-hydroxyuridine(34) in tRNA + A + H2O. Functionally, catalyzes oxygen-dependent 5-hydroxyuridine (ho5U) modification at position 34 in tRNAs. In Pectobacterium carotovorum subsp. carotovorum (strain PC1), this protein is tRNA uridine(34) hydroxylase.